A 412-amino-acid chain; its full sequence is Transcription termination factor 3, mitochondrial (412 aa).

The N-terminal 67 residues, 1–67 (MALLAQQLPR…IKTYRTLFWN (67 aa)), are a transit peptide targeting the mitochondrion.

The protein belongs to the mTERF family.

It is found in the mitochondrion. Its function is as follows. Binds promoter DNA and regulates initiation of transcription. Required for normal mitochondrial transcription and translation, and for normal assembly of mitochondrial respiratory complexes. Required for normal mitochondrial function. Maintains 16S rRNA levels and functions in mitochondrial ribosome assembly by regulating the biogenesis of the 39S ribosomal subunit. The chain is Transcription termination factor 3, mitochondrial (Mterf3) from Mus musculus (Mouse).